The chain runs to 135 residues: UPF0299 membrane protein ECA2828 (135 aa).

4 helical membrane passes run F5–G25, A30–L50, G63–M83, and F93–F113.

Belongs to the UPF0299 family.

Its subcellular location is the cell inner membrane. The sequence is that of UPF0299 membrane protein ECA2828 from Pectobacterium atrosepticum (strain SCRI 1043 / ATCC BAA-672) (Erwinia carotovora subsp. atroseptica).